A 316-amino-acid chain; its full sequence is MTSKNPIQKALYLAFERAQWSVLRDAVPMTLSEQDLENLRGINEKVSLTEVTDIYLPLSRLLNLIVKAKQQRGLVLDEFLGQKPSSSPYIISIAGSVAVGKSTTARILQALLRHWPEHPKVDLVTTDGFLYPLADLKRKGLLQRKGFPESYDMKMLVEFIAAVKSGQAHVNAPIYSHVTYDRIRGQHQTVSQPDILILEGLNVLQTGLDSPVDIRRPFVSDFVDFSIYVDAEEHLLKQWYQERFLQFRKGAFSDEKSYFHHYASLTDDEANVIAAKIWDTINGPNLQLNIQPTRERAHLILQKGQDHLMSHVLLRK.

95-102 (GSVAVGKS) is a binding site for ATP.

It belongs to the prokaryotic pantothenate kinase family.

It is found in the cytoplasm. It carries out the reaction (R)-pantothenate + ATP = (R)-4'-phosphopantothenate + ADP + H(+). Its pathway is cofactor biosynthesis; coenzyme A biosynthesis; CoA from (R)-pantothenate: step 1/5. This chain is Pantothenate kinase, found in Shewanella sp. (strain MR-4).